Here is a 698-residue protein sequence, read N- to C-terminus: Adhesion G protein-coupled receptor F4 (698 aa).

A signal peptide spans 1–19; sequence MKPWIAMVCCLVFFLTTEC. Residues 20–409 are Extracellular-facing; sequence SHSKPKTHRK…VKNTILNHIT (390 aa). Asn-61, Asn-168, Asn-213, Asn-268, Asn-290, Asn-344, and Asn-375 each carry an N-linked (GlcNAc...) asparagine glycan. The region spanning 250–401 is the GAIN-B domain; it reads RISHSSSEHS…SILMSSKPVK (152 aa). Intrachain disulfides connect Cys-353–Cys-380 and Cys-368–Cys-382. Residues 353-401 are GPS; it reads CVSWDPATGQWDESPCTVMSDINSTVKCRCRHTKAVTSFSILMSSKPVK. Residues 410–430 traverse the membrane as a helical segment; the sequence is FIGLSISIFSLVLCLVIEAIV. Topologically, residues 431 to 444 are cytoplasmic; it reads WSRVVVTEISYMRH. Residues 445 to 465 traverse the membrane as a helical segment; the sequence is VCIVNIAVSLLTANVWFIIGS. N-linked (GlcNAc...) asparagine glycosylation is present at Asn-466. The Extracellular segment spans residues 466–486; the sequence is NFSANVQEDHKWCVAVTFLCH. The chain crosses the membrane as a helical span at residues 487-507; the sequence is FFFLSLFFWMLFKALLIVYGI. Residues 508–518 lie on the Cytoplasmic side of the membrane; the sequence is LVVFRRMMKSR. Residues 519 to 539 form a helical membrane-spanning segment; it reads MMAIGFAIGYGCPLVIAVITV. The Extracellular portion of the chain corresponds to 540 to 566; it reads TVTEPGEGYTRKDACWLNWNQTKALFA. Asn-559 carries an N-linked (GlcNAc...) asparagine glycan. The helical transmembrane segment at 567–587 threads the bilayer; sequence FAIPALAIVAVNLLVVLAVAI. At 588-611 the chain is on the cytoplasmic side; the sequence is NTQRPLIGSSKSQDMAIVFRISKN. A helical membrane pass occupies residues 612 to 632; the sequence is VAILTPLLGLTWGFGLTTLLE. Topologically, residues 633 to 635 are extracellular; that stretch reads GVH. A helical membrane pass occupies residues 636–656; sequence LVFHIIFALLNAFQGFFILLF. The Cytoplasmic segment spans residues 657–698; sequence GTIMDHKIRDALRMRVSSLKGKSRAAEKVSLSPANGSRILNR.

Belongs to the G-protein coupled receptor 2 family. Adhesion G-protein coupled receptor (ADGR) subfamily. As to expression, expressed in squamous epithelia.

Its subcellular location is the membrane. Orphan receptor. This chain is Adhesion G protein-coupled receptor F4 (Adgrf4), found in Mus musculus (Mouse).